Reading from the N-terminus, the 366-residue chain is Putative F-box protein At1g26515 (366 aa).

The tract at residues 1-20 is disordered; that stretch reads MKTRSKKTKTENNQEKSKEK. Residues 8–20 show a composition bias toward basic and acidic residues; that stretch reads TKTENNQEKSKEK. One can recognise an F-box domain in the interval 20–66; sequence KNKFDQLPLDLEIEIFRRLPLKSVARFLTLSKSCAATIRSPSFITSF.

The chain is Putative F-box protein At1g26515 from Arabidopsis thaliana (Mouse-ear cress).